A 320-amino-acid chain; its full sequence is tRNA dimethylallyltransferase (320 aa).

14 to 21 (GPTASGKT) is an ATP binding site. 16–21 (TASGKT) contacts substrate. 2 interaction with substrate tRNA regions span residues 39–42 (DSAL) and 163–167 (QRLQR).

It belongs to the IPP transferase family. In terms of assembly, monomer. Requires Mg(2+) as cofactor.

It catalyses the reaction adenosine(37) in tRNA + dimethylallyl diphosphate = N(6)-dimethylallyladenosine(37) in tRNA + diphosphate. Functionally, catalyzes the transfer of a dimethylallyl group onto the adenine at position 37 in tRNAs that read codons beginning with uridine, leading to the formation of N6-(dimethylallyl)adenosine (i(6)A). The polypeptide is tRNA dimethylallyltransferase (Thioalkalivibrio sulfidiphilus (strain HL-EbGR7)).